We begin with the raw amino-acid sequence, 236 residues long: Small ribosomal subunit protein uS2c (236 aa).

This sequence belongs to the universal ribosomal protein uS2 family.

It is found in the plastid. It localises to the chloroplast. The protein is Small ribosomal subunit protein uS2c (rps2) of Agrostis stolonifera (Creeping bentgrass).